The sequence spans 1224 residues: uncharacterized protein (1224 aa).

Disordered regions lie at residues 1-67 (MNQD…SSSI), 111-151 (QQSH…PPPL), 193-270 (QTEL…DPNI), 316-416 (DYNN…TVKK), 430-957 (SDSG…QEEK), and 1078-1167 (SFLP…TSHV). Low complexity predominate over residues 10-48 (SFHSNNNSNSNHHHSYNNSINSGSSSSGSNNSSNNNSFN). The segment covering 49–58 (DEIEGGEIQE) has biased composition (acidic residues). Low complexity-rich tracts occupy residues 126–140 (SSSS…SSSS), 193–212 (QTEL…SSPP), and 228–241 (SAPT…SVSS). Residues 242–255 (LTQPQKPKSVQYSQ) are compositionally biased toward polar residues. Residues 260–270 (EIREEKVDPNI) are compositionally biased toward basic and acidic residues. The span at 316–338 (DYNNSNSNNSNNNNNNNNSITEN) shows a compositional bias: low complexity. Over residues 341 to 353 (DKMINNQPSSTNS) the composition is skewed to polar residues. Composition is skewed to low complexity over residues 379 to 413 (TTTT…TTPT) and 430 to 450 (SDSG…TSTP). 2 stretches are compositionally biased toward basic and acidic residues: residues 451 to 585 (KSKD…DKKK) and 630 to 646 (EIDK…KVES). Residues 662–719 (TTTTTTSTSSSSSLPSLSSSSSSLPLPSSSSSSSSSSSSSSSSSSSSSSSSSSSTTST) are compositionally biased toward low complexity. The segment covering 727–750 (PPPPPQQPPPPPPQQPPPPPPPIN) has biased composition (pro residues). Basic and acidic residues predominate over residues 755 to 892 (SEHDKKIIEK…SDRDRDRKDS (138 aa)). The span at 893-933 (NSNNNSNNNNNNNNNNNNNNNNNNNNKKDNNNNNNNNNNNN) shows a compositional bias: low complexity. The span at 948–957 (TPKKTKQEEK) shows a compositional bias: basic and acidic residues. Residues 950-991 (KKTKQEEKLIRSQIDQIKEDAKDLKKLAKELQSKNQNECLEM) are a coiled coil. Composition is skewed to low complexity over residues 1078–1108 (SFLP…TAPL) and 1114–1165 (NPSE…PNTS).

This is an uncharacterized protein from Dictyostelium discoideum (Social amoeba).